The primary structure comprises 332 residues: Probable class II chitinase ARB_00204 (332 aa).

The first 18 residues, 1-18 (MKTPFTILAALTVATTLA), serve as a signal peptide directing secretion. The 313-residue stretch at 19 to 331 (DVPDEWDIIE…NPHRKYLDSF (313 aa)) folds into the GH18 domain. The active-site Proton donor is the E118. N245 carries an N-linked (GlcNAc...) asparagine glycan.

Belongs to the glycosyl hydrolase 18 family. Chitinase class II subfamily.

It localises to the secreted. It catalyses the reaction Random endo-hydrolysis of N-acetyl-beta-D-glucosaminide (1-&gt;4)-beta-linkages in chitin and chitodextrins.. Functionally, degrades chitin and chitotriose. In Arthroderma benhamiae (strain ATCC MYA-4681 / CBS 112371) (Trichophyton mentagrophytes), this protein is Probable class II chitinase ARB_00204.